Consider the following 308-residue polypeptide: HPr kinase/phosphorylase (308 aa).

Residues histidine 138 and lysine 159 contribute to the active site. 153–160 (GESGLGKS) is an ATP binding site. Residue serine 160 coordinates Mg(2+). Catalysis depends on aspartate 177, which acts as the Proton acceptor; for phosphorylation activity. Proton donor; for dephosphorylation activity. Residues 201–210 (LEVRGLGLLD) are important for the catalytic mechanism of both phosphorylation and dephosphorylation. Residue glutamate 202 coordinates Mg(2+). Arginine 243 is a catalytic residue. The segment at 264–269 (QVAAGR) is important for the catalytic mechanism of dephosphorylation.

Belongs to the HPrK/P family. As to quaternary structure, homohexamer. Requires Mg(2+) as cofactor.

It carries out the reaction [HPr protein]-L-serine + ATP = [HPr protein]-O-phospho-L-serine + ADP + H(+). The enzyme catalyses [HPr protein]-O-phospho-L-serine + phosphate + H(+) = [HPr protein]-L-serine + diphosphate. Functionally, catalyzes the ATP- as well as the pyrophosphate-dependent phosphorylation of a specific serine residue in HPr, a phosphocarrier protein of the phosphoenolpyruvate-dependent sugar phosphotransferase system (PTS). HprK/P also catalyzes the pyrophosphate-producing, inorganic phosphate-dependent dephosphorylation (phosphorolysis) of seryl-phosphorylated HPr (P-Ser-HPr). This is HPr kinase/phosphorylase from Bordetella petrii (strain ATCC BAA-461 / DSM 12804 / CCUG 43448).